The chain runs to 320 residues: Ferrochelatase (320 aa).

Fe cation is bound by residues His194 and Glu275.

The protein belongs to the ferrochelatase family. In terms of assembly, monomer.

The protein localises to the cytoplasm. The catalysed reaction is heme b + 2 H(+) = protoporphyrin IX + Fe(2+). It functions in the pathway porphyrin-containing compound metabolism; protoheme biosynthesis; protoheme from protoporphyrin-IX: step 1/1. Catalyzes the ferrous insertion into protoporphyrin IX. The polypeptide is Ferrochelatase (Escherichia coli O127:H6 (strain E2348/69 / EPEC)).